We begin with the raw amino-acid sequence, 678 residues long: Probable antibacterial peptide polyprotein (678 aa).

Repeat copies occupy residues 1–67 (MRSP…PEVR), 68–114 (ERRS…PEVR), 115–161 (ERRS…PEVR), 162–208 (ERRS…PEVR), 209–255 (ERRS…PEVR), 256–302 (ERGS…PEVR), 303–349 (ERRS…PEVR), 350–396 (ERRS…PEVR), 397–443 (ERRS…PEVR), 444–490 (ERRS…PEVR), 491–537 (ERRS…PEVR), 538–584 (ERRS…PEVR), 585–631 (ERRS…PEVR), and 632–678 (ERRS…PEVR). Residues 1-678 (MRSPRVIHLA…SEGVVLPEVR (678 aa)) are 14 X approximate tandem repeats. Residue Thr32 is glycosylated (O-linked (GalNAc...) threonine). Disordered regions lie at residues 58–97 (SEAELLPEVRERRSPVDKGGYLPRPTPPRPVYRSRRDASL) and 113–678 (VRER…PEVR). Residues 64-73 (PEVRERRSPV) show a composition bias toward basic and acidic residues. Residues Thr83 and Thr130 are each glycosylated (O-linked (GalNAc...) threonine). Positions 145–157 (ESELSPLSEAEVL) are enriched in low complexity. Over residues 158–167 (PEVRERRSPV) the composition is skewed to basic and acidic residues. Thr177 is a glycosylation site (O-linked (GalNAc...) threonine). The span at 188–204 (VASLESELSPLSEAEVL) shows a compositional bias: low complexity. The segment covering 205-214 (PEVRERRSPV) has biased composition (basic and acidic residues). O-linked (GalNAc...) threonine glycosylation is found at Thr224 and Thr271. Positions 299–308 (PEVRERRSPV) are enriched in basic and acidic residues. O-linked (GalNAc...) threonine glycosylation occurs at Thr318. A compositionally biased stretch (low complexity) spans 333 to 345 (ESELSPLSEAEVL). Positions 346–355 (PEVRERRSPV) are enriched in basic and acidic residues. An O-linked (GalNAc...) threonine glycan is attached at Thr365. Positions 380-392 (ESELSPLSEAEVL) are enriched in low complexity. Over residues 393–402 (PEVRERRSPV) the composition is skewed to basic and acidic residues. A glycan (O-linked (GalNAc...) threonine) is linked at Thr412. A compositionally biased stretch (low complexity) spans 427–439 (ESELSPLSEAEVL). The segment covering 440-449 (PEVRERRSPV) has biased composition (basic and acidic residues). Thr459 carries O-linked (GalNAc...) threonine glycosylation. Low complexity predominate over residues 474 to 486 (ESELSPLSEAEVL). The span at 487–496 (PEVRERRSPV) shows a compositional bias: basic and acidic residues. O-linked (GalNAc...) threonine glycosylation occurs at Thr506. Positions 521-533 (ESELSPSSEAEVL) are enriched in low complexity. Residues 534 to 543 (PEVRERRSPV) show a composition bias toward basic and acidic residues. O-linked (GalNAc...) threonine glycosylation occurs at Thr553. Positions 568-580 (ESELSPLSEAEVL) are enriched in low complexity. A compositionally biased stretch (basic and acidic residues) spans 581–590 (PEVRERRSPV). O-linked (GalNAc...) threonine glycosylation occurs at Thr600. A compositionally biased stretch (low complexity) spans 615 to 627 (ESELSPLSEAEGL). The O-linked (GalNAc...) threonine glycan is linked to Thr647.

It is found in the secreted. In terms of biological role, has antibacterial activity in vitro. In Riptortus clavatus (Bean bug), this protein is Probable antibacterial peptide polyprotein.